The primary structure comprises 270 residues: Monocyte to macrophage differentiation factor 2 (270 aa).

Topologically, residues 1-38 (MFAPRLLDFQKTKYARFMNHRVPAHKRYQPTEYEHAAN) are cytoplasmic. The helical transmembrane segment at 39–59 (CATHAFWIIPSILGSSNLYFL) threads the bilayer. Residues 60-65 (SDDDWE) lie on the Lumenal side of the membrane. The chain crosses the membrane as a helical span at residues 66–86 (TISAWIYGLGLCGLFVVSTVF). The Cytoplasmic segment spans residues 87 to 102 (HTISWKKSHLRMVEHC). The helical transmembrane segment at 103–123 (LHMFDRMVIYFFIAASYAPWL) threads the bilayer. Residues 124-132 (NLRELGPWA) are Lumenal-facing. Residues 133–153 (SHMRWLVWIMASVGTIYVFFF) traverse the membrane as a helical segment. The Cytoplasmic portion of the chain corresponds to 154–182 (HERTGSCVQFLRGEACPKAGTACLPARYK). A helical transmembrane segment spans residues 183-203 (LVELLCYVVMGFFPALVILSM). Residues 204 to 205 (PN) are Lumenal-facing. Residues 206-226 (TEGIWELVTGGVFYCLGMVFF) form a helical membrane-spanning segment. At 227 to 233 (KSDGRIP) the chain is on the cytoplasmic side. A helical transmembrane segment spans residues 234 to 254 (FAHAIWHLFVAFGAGTHYYAI). Topologically, residues 255 to 270 (WRYLYLPSTLQTKVSK) are lumenal.

Belongs to the ADIPOR family. In terms of tissue distribution, shows restricted expression with highest levels in brain and testis.

The protein resides in the golgi apparatus membrane. This is Monocyte to macrophage differentiation factor 2 from Homo sapiens (Human).